Here is a 311-residue protein sequence, read N- to C-terminus: Putative dihydroorotate dehydrogenase A (fumarate) (311 aa).

Residues K45, 69 to 73, and N128 contribute to the substrate site; that span reads NSMGL. An FMN-binding site is contributed by 45–46; sequence KT. Position 128 (N128) interacts with FMN. C131 serves as the catalytic Nucleophile. FMN is bound by residues K165 and V193. 194–195 is a substrate binding site; that stretch reads NS. FMN is bound by residues G220, 248–249, and 270–271; these read GG and GT.

Belongs to the dihydroorotate dehydrogenase family. Type 1 subfamily. In terms of assembly, homodimer. FMN serves as cofactor.

It localises to the cytoplasm. The catalysed reaction is (S)-dihydroorotate + fumarate = orotate + succinate. Its pathway is pyrimidine metabolism; UMP biosynthesis via de novo pathway. In terms of biological role, catalyzes the conversion of dihydroorotate to orotate with fumarate as the electron acceptor. In Streptococcus uberis (strain ATCC BAA-854 / 0140J), this protein is Putative dihydroorotate dehydrogenase A (fumarate) (pyrD).